The sequence spans 240 residues: UDP-2,3-diacylglucosamine hydrolase (240 aa).

The Mn(2+) site is built by Asp-8, His-10, Asp-41, Asn-79, and His-114. Residue 79 to 80 coordinates substrate; the sequence is NR. Substrate-binding residues include Asp-122, Ser-160, Asn-164, Lys-167, and His-195. Positions 195 and 197 each coordinate Mn(2+).

This sequence belongs to the LpxH family. The cofactor is Mn(2+).

The protein localises to the cell inner membrane. The catalysed reaction is UDP-2-N,3-O-bis[(3R)-3-hydroxytetradecanoyl]-alpha-D-glucosamine + H2O = 2-N,3-O-bis[(3R)-3-hydroxytetradecanoyl]-alpha-D-glucosaminyl 1-phosphate + UMP + 2 H(+). Its pathway is glycolipid biosynthesis; lipid IV(A) biosynthesis; lipid IV(A) from (3R)-3-hydroxytetradecanoyl-[acyl-carrier-protein] and UDP-N-acetyl-alpha-D-glucosamine: step 4/6. Hydrolyzes the pyrophosphate bond of UDP-2,3-diacylglucosamine to yield 2,3-diacylglucosamine 1-phosphate (lipid X) and UMP by catalyzing the attack of water at the alpha-P atom. Involved in the biosynthesis of lipid A, a phosphorylated glycolipid that anchors the lipopolysaccharide to the outer membrane of the cell. The sequence is that of UDP-2,3-diacylglucosamine hydrolase from Escherichia coli O17:K52:H18 (strain UMN026 / ExPEC).